Consider the following 122-residue polypeptide: Small ribosomal subunit protein uS13 (122 aa).

The disordered stretch occupies residues 99 to 122; it reads RGQRTHTNARTRKGPAKAIAGKKK.

The protein belongs to the universal ribosomal protein uS13 family. Part of the 30S ribosomal subunit. Forms a loose heterodimer with protein S19. Forms two bridges to the 50S subunit in the 70S ribosome.

Located at the top of the head of the 30S subunit, it contacts several helices of the 16S rRNA. In the 70S ribosome it contacts the 23S rRNA (bridge B1a) and protein L5 of the 50S subunit (bridge B1b), connecting the 2 subunits; these bridges are implicated in subunit movement. Contacts the tRNAs in the A and P-sites. The chain is Small ribosomal subunit protein uS13 from Agrobacterium fabrum (strain C58 / ATCC 33970) (Agrobacterium tumefaciens (strain C58)).